Consider the following 445-residue polypeptide: Tubulin beta-9 chain (445 aa).

The GTP site is built by Gln11, Glu69, Ser138, Gly142, Thr143, Gly144, Asn204, and Asn226. Residue Glu69 participates in Mg(2+) binding. The segment at 423 to 445 (QQYQDATADDEEYEEEEEYEAEA) is disordered. Residues 429–445 (TADDEEYEEEEEYEAEA) show a composition bias toward acidic residues.

It belongs to the tubulin family. Dimer of alpha and beta chains. A typical microtubule is a hollow water-filled tube with an outer diameter of 25 nm and an inner diameter of 15 nM. Alpha-beta heterodimers associate head-to-tail to form protofilaments running lengthwise along the microtubule wall with the beta-tubulin subunit facing the microtubule plus end conferring a structural polarity. Microtubules usually have 13 protofilaments but different protofilament numbers can be found in some organisms and specialized cells. Requires Mg(2+) as cofactor.

The protein localises to the cytoplasm. It localises to the cytoskeleton. In terms of biological role, tubulin is the major constituent of microtubules, a cylinder consisting of laterally associated linear protofilaments composed of alpha- and beta-tubulin heterodimers. Microtubules grow by the addition of GTP-tubulin dimers to the microtubule end, where a stabilizing cap forms. Below the cap, tubulin dimers are in GDP-bound state, owing to GTPase activity of alpha-tubulin. The sequence is that of Tubulin beta-9 chain from Gossypium hirsutum (Upland cotton).